The primary structure comprises 284 residues: Ribosomal RNA small subunit methyltransferase A (284 aa).

Residues H12, L14, G47, E68, D93, and N118 each coordinate S-adenosyl-L-methionine.

The protein belongs to the class I-like SAM-binding methyltransferase superfamily. rRNA adenine N(6)-methyltransferase family. RsmA subfamily.

The protein resides in the cytoplasm. It carries out the reaction adenosine(1518)/adenosine(1519) in 16S rRNA + 4 S-adenosyl-L-methionine = N(6)-dimethyladenosine(1518)/N(6)-dimethyladenosine(1519) in 16S rRNA + 4 S-adenosyl-L-homocysteine + 4 H(+). Its function is as follows. Specifically dimethylates two adjacent adenosines (A1518 and A1519) in the loop of a conserved hairpin near the 3'-end of 16S rRNA in the 30S particle. May play a critical role in biogenesis of 30S subunits. The sequence is that of Ribosomal RNA small subunit methyltransferase A from Synechocystis sp. (strain ATCC 27184 / PCC 6803 / Kazusa).